The chain runs to 208 residues: UPF0637 protein Bcer98_2662 (208 aa).

It belongs to the UPF0637 family.

The protein is UPF0637 protein Bcer98_2662 of Bacillus cytotoxicus (strain DSM 22905 / CIP 110041 / 391-98 / NVH 391-98).